Reading from the N-terminus, the 720-residue chain is DNA helicase II (720 aa).

The region spanning 8 to 286 is the UvrD-like helicase ATP-binding domain; it reads DSLNDKQREA…IRLEQNYRST (279 aa). ATP contacts are provided by residues 32–37 and Arg284; that span reads GSGKTR. Residues 287–564 form the UvrD-like helicase C-terminal domain; that stretch reads SNILSAANAL…QLMTLHSAKG (278 aa).

This sequence belongs to the helicase family. UvrD subfamily.

It catalyses the reaction Couples ATP hydrolysis with the unwinding of duplex DNA by translocating in the 3'-5' direction.. It carries out the reaction ATP + H2O = ADP + phosphate + H(+). Its function is as follows. A helicase with DNA-dependent ATPase activity. Unwinds DNA duplexes with 3'-5' polarity. Translocates on single-stranded DNA with 3'-5' polarity. Initiates unwinding more efficiently from a nicked substrate than double-stranded DNA. Involved in the post-incision events of nucleotide excision repair and methyl-directed mismatch repair, and probably also in repair of alkylated DNA. This is DNA helicase II from Escherichia coli (strain K12).